The chain runs to 180 residues: Translation initiation factor IF-3 (180 aa).

This sequence belongs to the IF-3 family. In terms of assembly, monomer.

It is found in the cytoplasm. Its function is as follows. IF-3 binds to the 30S ribosomal subunit and shifts the equilibrium between 70S ribosomes and their 50S and 30S subunits in favor of the free subunits, thus enhancing the availability of 30S subunits on which protein synthesis initiation begins. The polypeptide is Translation initiation factor IF-3 (Xylella fastidiosa (strain 9a5c)).